A 216-amino-acid polypeptide reads, in one-letter code: Twisted gastrulation protein homolog 1-A (216 aa).

The N-terminal stretch at 1 to 25 (MKPSFLHIPAAALLLCSLWILPIYC) is a signal peptide. 3 N-linked (GlcNAc...) asparagine glycosylation sites follow: asparagine 52, asparagine 81, and asparagine 145.

The protein belongs to the twisted gastrulation protein family. Binds directly to bmp2, bmp4 and bmp7 and can form a ternary complex with bmps and chordin, thus preventing the binding of bmps to their cell surface receptors. In terms of tissue distribution, posterior defects are induced by overexpression. This may arise through alteration of bmp4 or chrd function in the developing tailbud region.

The protein localises to the secreted. Functionally, involved in dorsal-ventral patterning, permitting peak BMP signaling by antagonizing the residual anti-BMP activity of the cleavage products of chrd. Functions to promote the formation of ventral mesoderm by increasing the activity of bmp7 and other BMPS. Seems to antagonize BMP signaling by forming ternary complexes with chrd and BMPs, thereby preventing BMPs from binding to their receptors. In addition to the anti-BMP function, also has pro-BMP activity, partly mediated by cleavage and degradation of chrd, which releases BMPs from ternary complexes. May be an important modulator of BMP-regulated cartilage development and chondrocyte differentiation. This Xenopus laevis (African clawed frog) protein is Twisted gastrulation protein homolog 1-A (twsg1-a).